The following is a 356-amino-acid chain: Vacuolar protein sorting-associated protein 26 (356 aa).

Positions 301–356 (MRRPGTEDDEEEKQTTSIPGTQKFTAPAPVEHPKPESPRSDPKSGSTSPDDNSDSS) are disordered. Residues 315–324 (TTSIPGTQKF) are compositionally biased toward polar residues. Residues 331–342 (EHPKPESPRSDP) show a composition bias toward basic and acidic residues.

Belongs to the VPS26 family.

Functionally, may play a role in vesicular protein sorting, similar to the yeast retromer proteins. In Caenorhabditis elegans, this protein is Vacuolar protein sorting-associated protein 26 (vps-26).